A 405-amino-acid chain; its full sequence is Accessory Sec system protein translocase subunit SecY2 (405 aa).

The next 10 helical transmembrane spans lie at 14–34 (LFTL…LPFV), 63–83 (LSIF…WQMF), 104–124 (MYLT…RLPV), 131–151 (ILVV…LVWL), 156–176 (ASMG…LNIP), 191–211 (GIIV…ALMY), 247–267 (MYVM…GFIF), 285–305 (PLWV…FAFV), 343–363 (FSVI…LFVL), and 368–388 (LLRL…IFTI).

This sequence belongs to the SecY/SEC61-alpha family. SecY2 subfamily. As to quaternary structure, component of the accessory SecA2/SecY2 protein translocase complex required to export cell wall proteins. May form heterotrimers with SecE and SecG subunits.

It is found in the cell membrane. Functionally, part of the accessory SecA2/SecY2 system specifically required for export of possible cell wall proteins. The central subunit of a protein translocation channel. The polypeptide is Accessory Sec system protein translocase subunit SecY2 (Streptococcus pneumoniae (strain CGSP14)).